The sequence spans 261 residues: Small ribosomal subunit protein uS2 (261 aa).

Belongs to the universal ribosomal protein uS2 family.

In Thermodesulfovibrio yellowstonii (strain ATCC 51303 / DSM 11347 / YP87), this protein is Small ribosomal subunit protein uS2.